We begin with the raw amino-acid sequence, 158 residues long: S-ribosylhomocysteine lyase (158 aa).

Positions 54, 58, and 124 each coordinate Fe cation.

This sequence belongs to the LuxS family. Homodimer. Requires Fe cation as cofactor.

It carries out the reaction S-(5-deoxy-D-ribos-5-yl)-L-homocysteine = (S)-4,5-dihydroxypentane-2,3-dione + L-homocysteine. Its function is as follows. Involved in the synthesis of autoinducer 2 (AI-2) which is secreted by bacteria and is used to communicate both the cell density and the metabolic potential of the environment. The regulation of gene expression in response to changes in cell density is called quorum sensing. Catalyzes the transformation of S-ribosylhomocysteine (RHC) to homocysteine (HC) and 4,5-dihydroxy-2,3-pentadione (DPD). The chain is S-ribosylhomocysteine lyase from Lactobacillus johnsonii (strain CNCM I-12250 / La1 / NCC 533).